The primary structure comprises 325 residues: N-acetyl-gamma-glutamyl-phosphate reductase (325 aa).

Residue C135 is part of the active site.

This sequence belongs to the NAGSA dehydrogenase family. Type 1 subfamily.

It localises to the cytoplasm. The enzyme catalyses N-acetyl-L-glutamate 5-semialdehyde + phosphate + NADP(+) = N-acetyl-L-glutamyl 5-phosphate + NADPH + H(+). It participates in amino-acid biosynthesis; L-arginine biosynthesis; N(2)-acetyl-L-ornithine from L-glutamate: step 3/4. Its function is as follows. Catalyzes the NADPH-dependent reduction of N-acetyl-5-glutamyl phosphate to yield N-acetyl-L-glutamate 5-semialdehyde. This chain is N-acetyl-gamma-glutamyl-phosphate reductase, found in Karelsulcia muelleri (strain GWSS) (Sulcia muelleri).